A 239-amino-acid polypeptide reads, in one-letter code: MFVSRLAASGLLLLALLAVSLDGKPVQQWSHKGWPPRPQIPPLVVQQWSQKPWPPGHHIPPVVVQEWPPGHHIPPLVVQQWSQKKWPPGHHIPPLVVQKWDPPPISPPLLKPHESPAGGTTALREELSLGPEAALDTPPAGPDVGPRGSKAPAAPHRLPKSKGASATSAASRPMRDLRTDGKQARQNWGRMMNPDHHAVGGGGGGGGARRLKGLAKKRVGDGCFGLKLDRIGSMSGLGC.

A signal peptide spans M1–G23. 2 consecutive propeptides follow at residues K24–G33 and L43–S49. Q50 bears the Pyrrolidone carboxylic acid mark. A propeptide spanning residues V62–V64 is cleaved from the precursor. Position 65 is a pyrrolidone carboxylic acid (Q65). A propeptide spanning residues L76 to S82 is cleaved from the precursor. The residue at position 83 (Q83) is a Pyrrolidone carboxylic acid. The propeptide occupies L95–V97. Q98 bears the Pyrrolidone carboxylic acid mark. 2 consecutive propeptides follow at residues L109–D136 and G148–K217. Residues E132 to G205 form a disordered region. Residues S161 to S171 show a composition bias toward low complexity. Positions P173–Q183 are enriched in basic and acidic residues. Residues C223 and C239 are joined by a disulfide bond.

The protein in the N-terminal section; belongs to the bradykinin-potentiating peptide family. This sequence in the central section; belongs to the bradykinin inhibitor peptide family. It in the C-terminal section; belongs to the natriuretic peptide family. Expressed by the venom gland.

The protein localises to the secreted. Bradykinin-potentiating peptides both inhibit the activity of the angiotensin-converting enzyme (ACE) and enhances the action of bradykinin by inhibiting the peptidases that inactivate it. They act as indirect hypotensive agent. Its function is as follows. inhibits angiotensin-converting enzyme (ACE) activity (IC(50)=4.25 uM), preventing the release of angiotensin and thus indirectly contributing to hypotension. In vivo, induce hypotensive response in both normotensive and hypertensive rats. In terms of biological role, antagonizes the vasodilatory actions of bradykinin at the B2 bradykinin receptor (BDKRB2). Functionally, has a vasorelaxant activity in rat aortic strips and a diuretic potency in anesthetized rats. May act by activating natriuretic receptors (NPR1 and/or NPR2). In Lachesis muta muta (Bushmaster), this protein is Bradykinin-potentiating and C-type natriuretic peptides.